Here is a 301-residue protein sequence, read N- to C-terminus: GTPase Era (301 aa).

In terms of domain architecture, Era-type G spans Lys-6–Ile-173. The G1 stretch occupies residues Gly-14–Ser-21. Gly-14–Ser-21 is a binding site for GTP. A G2 region spans residues Gln-40 to Asn-44. The interval Asp-61–Gly-64 is G3. Residues Asp-61–Ile-65 and Asn-123–Asp-126 contribute to the GTP site. Residues Asn-123–Asp-126 are G4. The interval Ile-152–Ala-154 is G5. A KH type-2 domain is found at Thr-204–Lys-282.

It belongs to the TRAFAC class TrmE-Era-EngA-EngB-Septin-like GTPase superfamily. Era GTPase family. As to quaternary structure, monomer.

The protein resides in the cytoplasm. It is found in the cell membrane. Its function is as follows. An essential GTPase that binds both GDP and GTP, with rapid nucleotide exchange. Plays a role in 16S rRNA processing and 30S ribosomal subunit biogenesis and possibly also in cell cycle regulation and energy metabolism. This Listeria welshimeri serovar 6b (strain ATCC 35897 / DSM 20650 / CCUG 15529 / CIP 8149 / NCTC 11857 / SLCC 5334 / V8) protein is GTPase Era.